A 1169-amino-acid polypeptide reads, in one-letter code: Chromosome partition protein Smc (1169 aa).

32–39 is a binding site for ATP; that stretch reads PNGCGKSN. Coiled coils occupy residues 170–507 and 659–1030; these read ISKY…ALGE and REQQ…FQSL.

Belongs to the SMC family. As to quaternary structure, homodimer.

It localises to the cytoplasm. In terms of biological role, required for chromosome condensation and partitioning. This is Chromosome partition protein Smc from Coxiella burnetii (strain RSA 493 / Nine Mile phase I).